A 256-amino-acid chain; its full sequence is Pimeloyl-[acyl-carrier protein] methyl ester esterase (256 aa).

The 228-residue stretch at 15–242 (HLVLLHGWGL…AAHAPFISHP (228 aa)) folds into the AB hydrolase-1 domain. Residues Trp-22, 82 to 83 (SL), and 143 to 147 (FLALQ) each bind substrate. Ser-82 functions as the Nucleophile in the catalytic mechanism. Catalysis depends on residues Asp-207 and His-235. Residue His-235 participates in substrate binding.

It belongs to the AB hydrolase superfamily. Carboxylesterase BioH family. In terms of assembly, monomer.

The protein resides in the cytoplasm. It catalyses the reaction 6-carboxyhexanoyl-[ACP] methyl ester + H2O = 6-carboxyhexanoyl-[ACP] + methanol + H(+). It functions in the pathway cofactor biosynthesis; biotin biosynthesis. The physiological role of BioH is to remove the methyl group introduced by BioC when the pimeloyl moiety is complete. It allows to synthesize pimeloyl-ACP via the fatty acid synthetic pathway through the hydrolysis of the ester bonds of pimeloyl-ACP esters. In Shigella dysenteriae serotype 1 (strain Sd197), this protein is Pimeloyl-[acyl-carrier protein] methyl ester esterase.